We begin with the raw amino-acid sequence, 483 residues long: Aspartyl/glutamyl-tRNA(Asn/Gln) amidotransferase subunit B (483 aa).

The protein belongs to the GatB/GatE family. GatB subfamily. As to quaternary structure, heterotrimer of A, B and C subunits.

It carries out the reaction L-glutamyl-tRNA(Gln) + L-glutamine + ATP + H2O = L-glutaminyl-tRNA(Gln) + L-glutamate + ADP + phosphate + H(+). The enzyme catalyses L-aspartyl-tRNA(Asn) + L-glutamine + ATP + H2O = L-asparaginyl-tRNA(Asn) + L-glutamate + ADP + phosphate + 2 H(+). In terms of biological role, allows the formation of correctly charged Asn-tRNA(Asn) or Gln-tRNA(Gln) through the transamidation of misacylated Asp-tRNA(Asn) or Glu-tRNA(Gln) in organisms which lack either or both of asparaginyl-tRNA or glutaminyl-tRNA synthetases. The reaction takes place in the presence of glutamine and ATP through an activated phospho-Asp-tRNA(Asn) or phospho-Glu-tRNA(Gln). The polypeptide is Aspartyl/glutamyl-tRNA(Asn/Gln) amidotransferase subunit B (Thermomicrobium roseum (strain ATCC 27502 / DSM 5159 / P-2)).